The chain runs to 304 residues: Tyrosine recombinase XerD (304 aa).

The Core-binding (CB) domain occupies 1 to 92; the sequence is MKARVLAKTW…VARGLHKFAL (92 aa). Positions 113 to 298 constitute a Tyr recombinase domain; sequence HLPDTLSINE…TADSLREVWR (186 aa). Active-site residues include Arg-156, Lys-180, His-250, Arg-253, and His-276. The active-site O-(3'-phospho-DNA)-tyrosine intermediate is Tyr-285.

Belongs to the 'phage' integrase family. XerD subfamily. In terms of assembly, forms a cyclic heterotetrameric complex composed of two molecules of XerC and two molecules of XerD.

Its subcellular location is the cytoplasm. Functionally, site-specific tyrosine recombinase, which acts by catalyzing the cutting and rejoining of the recombining DNA molecules. The XerC-XerD complex is essential to convert dimers of the bacterial chromosome into monomers to permit their segregation at cell division. It also contributes to the segregational stability of plasmids. In Corynebacterium glutamicum (strain ATCC 13032 / DSM 20300 / JCM 1318 / BCRC 11384 / CCUG 27702 / LMG 3730 / NBRC 12168 / NCIMB 10025 / NRRL B-2784 / 534), this protein is Tyrosine recombinase XerD.